Reading from the N-terminus, the 648-residue chain is Adhesion G-protein coupled receptor G1 (648 aa).

Residues 1-24 form the signal peptide; it reads MKQNPAKTARMWIIICLLFVLGQA. Topologically, residues 25–370 are extracellular; sequence TDNDRDFKMC…STVRHLKALT (346 aa). An intrachain disulfide couples Cys-34 to Cys-96. N-linked (GlcNAc...) asparagine glycans are attached at residues Asn-62, Asn-91, Asn-114, Asn-146, Asn-222, Asn-262, and Asn-286. A disulfide bond links Cys-127 and Cys-176. A GAIN-B domain is found at 214 to 361; sequence MDEEFTGHNF…AILVQVEQKS (148 aa). Disulfide bonds link Cys-313/Cys-343 and Cys-331/Cys-345. Residues 313-361 are GPS; it reads CVSWDTKQDNEVNWKDDGCDTVKINEEQTECHCNHLTYFAILVQVEQKS. The segment at 349 to 361 is stachel; that stretch reads TYFAILVQVEQKS. The chain crosses the membrane as a helical span at residues 371 to 391; it reads FITAVGCAVSLVSCLVLFYWL. The Cytoplasmic portion of the chain corresponds to 392-408; sequence CKRRRGKKNQISLVHRG. Residues 409–429 form a helical membrane-spanning segment; that stretch reads LVVAIFLLCLFFILTGILANV. The Extracellular portion of the chain corresponds to 430 to 443; that stretch reads ANETVCQLTGSLLH. Asn-431 carries N-linked (GlcNAc...) asparagine glycosylation. A helical membrane pass occupies residues 444–464; that stretch reads YGLLSTLCWMAMEVFHTFLLV. Topologically, residues 465–471 are cytoplasmic; it reads RKVFNSP. A helical membrane pass occupies residues 472–492; it reads LPIWIFYLMGFGFPFLLVSIL. At 493 to 530 the chain is on the extracellular side; it reads LSVGDIYGERKIKPSDDVNNPYRMCWMTEGDKSQLAHY. The helical transmembrane segment at 531-551 threads the bilayer; that stretch reads IINIGLLAVVVSSGLVMLFLV. Topologically, residues 552–563 are cytoplasmic; sequence VREIRNRPDWKK. A helical membrane pass occupies residues 564-586; sequence IHVAFLSIWGLTCLYGTTWALGF. At 587 to 595 the chain is on the extracellular side; that stretch reads LDFGPFSEV. Residues 596 to 618 form a helical membrane-spanning segment; it reads TLFLFCIINSLQGFFLMLRYYAL. Over 619–648 the chain is Cytoplasmic; sequence ERMKKKDVSSSDGSSSGSSKQHMLQTNEKS.

The protein belongs to the G-protein coupled receptor 2 family. LN-TM7 subfamily. Heterodimer of 2 chains generated by proteolytic processing; the large extracellular N-terminal fragment (ADGRG1 NT) and the membrane-bound C-terminal fragment (ADGRG1-CT) predominantly remain associated and non-covalently linked. Post-translationally, autoproteolytically cleaved into 2 fragments; the large extracellular N-terminal fragment (ADGRG1 NT) and the membrane-bound C-terminal fragment (ADGRG1 CT) predominantly remain associated and non-covalently linked.

It localises to the cell membrane. Forms a heterodimer of 2 chains generated by proteolytic processing that remain associated through non-covalent interactions mediated by the GAIN-B domain. In the inactivated receptor, the Stachel sequence (also named stalk) is embedded in the GAIN-B domain, where it adopts a beta-strand conformation. On activation, the Stachel moves into the 7 transmembrane region and adopts a twisted hook-shaped configuration that forms contacts within the receptor, leading to coupling of a G-alpha protein, which activates signaling. The cleaved GAIN-B and N-terminal domains can then dissociate from the rest of the receptor. Adhesion G-protein coupled receptor (aGPCR), which is involved in oligodendrocyte development and maintenance of peripheral myelin. Ligand binding causes a conformation change that triggers signaling via guanine nucleotide-binding proteins (G proteins) and modulates the activity of downstream effectors, such as RhoA pathway. Adgrg1 is coupled to G(12) and/or G(13) G proteins (gna12 and gna13, respectively) and mediates the activation Rho small GTPases. Adgrg1-dependent RhoA signaling promotes timely radial sorting of axons. Required to establish proper myelin thickness and facilitate organization of the myelin sheath in the mature peripheral nervous system. This Danio rerio (Zebrafish) protein is Adhesion G-protein coupled receptor G1.